The chain runs to 229 residues: Extracellular endonuclease (229 aa).

Positions 1–19 (MSARFIAVFCLFFTVTAHA) are cleaved as a signal peptide. Residues 69 to 95 (RADASNGNTSSRPGRSGISASAGKPVG) form a disordered region. Over residues 71-81 (DASNGNTSSRP) the composition is skewed to polar residues.

The protein belongs to the EndA/NucM nuclease family.

The protein resides in the secreted. This Pseudomonas fluorescens biotype A protein is Extracellular endonuclease (endX).